Consider the following 123-residue polypeptide: MIQTQTMLDVADNSGARRVQCIKVLGGSHRRYARVGDVIKVTVKEAIPRGKVKKGQVLKAVVVRTKSGVRRTDGSLIRFDGNAAVLLHNANEQPIGTRIFGPVTRELRNEKFMKIISLAPEVL.

The protein belongs to the universal ribosomal protein uL14 family. As to quaternary structure, part of the 50S ribosomal subunit. Forms a cluster with proteins L3 and L19. In the 70S ribosome, L14 and L19 interact and together make contacts with the 16S rRNA in bridges B5 and B8.

Binds to 23S rRNA. Forms part of two intersubunit bridges in the 70S ribosome. The chain is Large ribosomal subunit protein uL14 from Chromohalobacter salexigens (strain ATCC BAA-138 / DSM 3043 / CIP 106854 / NCIMB 13768 / 1H11).